The primary structure comprises 547 residues: Puff-specific protein Bx42 (547 aa).

The SNW stretch occupies residues 177–343; sequence AQYIRYTPSQ…AREERAGLRN (167 aa). Ser-227 and Ser-235 each carry phosphoserine. Disordered regions lie at residues 333-398 and 486-547; these read RARE…ERDI and QFSG…SKRD. Composition is skewed to basic and acidic residues over residues 358 to 398 and 526 to 539; these read EVRE…ERDI and KRAE…SSHS.

Belongs to the SNW family.

It localises to the nucleus. In terms of biological role, may play a role in chromatin structure and function. The polypeptide is Puff-specific protein Bx42 (Bx42) (Drosophila melanogaster (Fruit fly)).